Here is a 441-residue protein sequence, read N- to C-terminus: Methylenetetrahydrofolate--tRNA-(uracil-5-)-methyltransferase TrmFO (441 aa).

An FAD-binding site is contributed by 7–12 (GAGLSG).

This sequence belongs to the MnmG family. TrmFO subfamily. Requires FAD as cofactor.

The protein localises to the cytoplasm. The enzyme catalyses uridine(54) in tRNA + (6R)-5,10-methylene-5,6,7,8-tetrahydrofolate + NADH + H(+) = 5-methyluridine(54) in tRNA + (6S)-5,6,7,8-tetrahydrofolate + NAD(+). The catalysed reaction is uridine(54) in tRNA + (6R)-5,10-methylene-5,6,7,8-tetrahydrofolate + NADPH + H(+) = 5-methyluridine(54) in tRNA + (6S)-5,6,7,8-tetrahydrofolate + NADP(+). Functionally, catalyzes the folate-dependent formation of 5-methyl-uridine at position 54 (M-5-U54) in all tRNAs. The polypeptide is Methylenetetrahydrofolate--tRNA-(uracil-5-)-methyltransferase TrmFO (Pseudothermotoga lettingae (strain ATCC BAA-301 / DSM 14385 / NBRC 107922 / TMO) (Thermotoga lettingae)).